Here is a 265-residue protein sequence, read N- to C-terminus: 4-hydroxy-tetrahydrodipicolinate reductase (265 aa).

NAD(+) is bound by residues 7–12 and D33; that span reads GASGRM. Residue R34 participates in NADP(+) binding. NAD(+) contacts are provided by residues 96–98 and 120–123; these read GTT and ASNF. H153 (proton donor/acceptor) is an active-site residue. A (S)-2,3,4,5-tetrahydrodipicolinate-binding site is contributed by H154. K157 serves as the catalytic Proton donor. 163-164 is a (S)-2,3,4,5-tetrahydrodipicolinate binding site; the sequence is GT.

This sequence belongs to the DapB family.

It is found in the cytoplasm. The catalysed reaction is (S)-2,3,4,5-tetrahydrodipicolinate + NAD(+) + H2O = (2S,4S)-4-hydroxy-2,3,4,5-tetrahydrodipicolinate + NADH + H(+). It carries out the reaction (S)-2,3,4,5-tetrahydrodipicolinate + NADP(+) + H2O = (2S,4S)-4-hydroxy-2,3,4,5-tetrahydrodipicolinate + NADPH + H(+). It functions in the pathway amino-acid biosynthesis; L-lysine biosynthesis via DAP pathway; (S)-tetrahydrodipicolinate from L-aspartate: step 4/4. Its function is as follows. Catalyzes the conversion of 4-hydroxy-tetrahydrodipicolinate (HTPA) to tetrahydrodipicolinate. This Paraburkholderia phymatum (strain DSM 17167 / CIP 108236 / LMG 21445 / STM815) (Burkholderia phymatum) protein is 4-hydroxy-tetrahydrodipicolinate reductase.